The primary structure comprises 455 residues: Gamma-aminobutyric acid receptor subunit alpha-1 (455 aa).

Positions 1 to 27 (MKKSRGLSDYLWAWTLILSTLSGRSYG) are cleaved as a signal peptide. At 28 to 252 (QPSQDELKDN…FHLKRKIGYF (225 aa)) the chain is on the extracellular side. Asparagine 37 is a glycosylation site (N-linked (GlcNAc...) asparagine). Residue arginine 93 coordinates 4-aminobutanoate. The N-linked (GlcNAc...) asparagine glycan is linked to asparagine 137. 4-aminobutanoate is bound at residue threonine 156. Cysteine 165 and cysteine 179 are oxidised to a cystine. Residues 253 to 273 (VIQTYLPCIMTVILSQVSFWL) form a helical membrane-spanning segment. The Cytoplasmic portion of the chain corresponds to 274-278 (NRESV). Residues 279–300 (PARTVFGVTTVLTMTTLSISAR) form a helical membrane-spanning segment. The Extracellular portion of the chain corresponds to 301–310 (NSLPKVAYAT). A helical transmembrane segment spans residues 311 to 332 (AMDWFIAVCYAFVFSALIEFAT). Over 333–420 (VNYFTKRGYA…TFNSVSKIDR (88 aa)) the chain is Cytoplasmic. A helical transmembrane segment spans residues 421-440 (LSRIAFPLLFGIFNLVYWAT). Over 441–455 (YLNREPQLKAPTPHQ) the chain is Extracellular.

The protein belongs to the ligand-gated ion channel (TC 1.A.9) family. Gamma-aminobutyric acid receptor (TC 1.A.9.5) subfamily. GABRA1 sub-subfamily. As to quaternary structure, heteropentamer, formed by a combination of alpha (GABRA1-6), beta (GABRB1-3), gamma (GABRG1-3), delta (GABRD), epsilon (GABRE), rho (GABRR1-3), pi (GABRP) and theta (GABRQ) subunits, each subunit exhibiting distinct physiological and pharmacological properties. Interacts with UBQLN1. Interacts with TRAK1. Interacts with KIF21B. Identified in a complex of 720 kDa composed of LHFPL4, NLGN2, GABRA1, GABRB2, GABRG2 and GABRB3. Interacts with LHFPL4. Interacts with NLGN2. Interacts with SHISA7; interaction leads to the regulation of GABA(A) receptor trafficking, channel deactivation kinetics and pharmacology. Glycosylated. Expressed in the cerebellum.

The protein localises to the postsynaptic cell membrane. The protein resides in the cell membrane. It localises to the cytoplasmic vesicle membrane. It catalyses the reaction chloride(in) = chloride(out). Allosterically activated by benzodiazepines, the neuroanesthetic alphaxalone and pentobarbital. Inhibited by the antagonist bicuculline. Potentiated by histamine. In terms of biological role, alpha subunit of the heteropentameric ligand-gated chloride channel gated by Gamma-aminobutyric acid (GABA), a major inhibitory neurotransmitter in the brain. GABA-gated chloride channels, also named GABA(A) receptors (GABAAR), consist of five subunits arranged around a central pore and contain GABA active binding site(s) located at the alpha and beta subunit interface(s). When activated by GABA, GABAARs selectively allow the flow of chloride anions across the cell membrane down their electrochemical gradient. Alpha-1/GABRA1-containing GABAARs are largely synaptic. Chloride influx into the postsynaptic neuron following GABAAR opening decreases the neuron ability to generate a new action potential, thereby reducing nerve transmission. GABAARs containing alpha-1 and beta-2 or -3 subunits exhibit synaptogenic activity; the gamma-2 subunit being necessary but not sufficient to induce rapid synaptic contacts formation. GABAARs function also as histamine receptor where histamine binds at the interface of two neighboring beta subunits and potentiates GABA response. GABAARs containing alpha, beta and epsilon subunits also permit spontaneous chloride channel activity while preserving the structural information required for GABA-gated openings. Alpha-1-mediated plasticity in the orbitofrontal cortex regulates context-dependent action selection. Together with rho subunits, may also control neuronal and glial GABAergic transmission in the cerebellum. This Mus musculus (Mouse) protein is Gamma-aminobutyric acid receptor subunit alpha-1.